Here is a 301-residue protein sequence, read N- to C-terminus: Probable alpha-L-glutamate ligase 2 (301 aa).

The region spanning 104 to 287 (LQLLSRKSIG…VADKIIQFIE (184 aa)) is the ATP-grasp domain. Residues Lys-141, 178 to 179 (EY), Asp-187, and 211 to 213 (RSN) contribute to the ATP site. Residues Asp-248, Glu-260, and Asn-262 each coordinate Mg(2+). Residues Asp-248, Glu-260, and Asn-262 each contribute to the Mn(2+) site.

This sequence belongs to the RimK family. The cofactor is Mg(2+). Mn(2+) serves as cofactor.

The chain is Probable alpha-L-glutamate ligase 2 from Shewanella denitrificans (strain OS217 / ATCC BAA-1090 / DSM 15013).